A 141-amino-acid polypeptide reads, in one-letter code: Alpha-lactalbumin (141 aa).

An N-terminal signal peptide occupies residues Met1–Ala19. The 122-residue stretch at Thr20–Lys141 folds into the C-type lysozyme domain. Disulfide bonds link Cys25/Cys139, Cys47/Cys130, Cys80/Cys96, and Cys92/Cys110. A glycan (N-linked (GlcNAc...) asparagine) is linked at Asn64. Residues Asp101, Asp106, and Asp107 each contribute to the Ca(2+) site.

The protein belongs to the glycosyl hydrolase 22 family. In terms of assembly, lactose synthase (LS) is a heterodimer of a catalytic component, beta1,4-galactosyltransferase (beta4Gal-T1) and a regulatory component, alpha-lactalbumin (LA). As to expression, mammary gland specific. Secreted in milk.

The protein localises to the secreted. In terms of biological role, regulatory subunit of lactose synthase, changes the substrate specificity of galactosyltransferase in the mammary gland making glucose a good acceptor substrate for this enzyme. This enables LS to synthesize lactose, the major carbohydrate component of milk. In other tissues, galactosyltransferase transfers galactose onto the N-acetylglucosamine of the oligosaccharide chains in glycoproteins. The sequence is that of Alpha-lactalbumin (LALBA) from Oryctolagus cuniculus (Rabbit).